The sequence spans 828 residues: Protein ELFN1 (828 aa).

Positions methionine 1 to alanine 27 are cleaved as a signal peptide. The Extracellular segment spans residues aspartate 28–tyrosine 418. Asparagine 59 carries N-linked (GlcNAc...) asparagine glycosylation. LRR repeat units follow at residues threonine 61 to arginine 82, asparagine 85 to glycine 106, asparagine 109 to glycine 130, lysine 133 to glutamate 154, and asparagine 157 to glycine 178. Asparagine 85, asparagine 90, and asparagine 122 each carry an N-linked (GlcNAc...) asparagine glycan. Residues asparagine 190 to glutamate 252 enclose the LRRCT domain. Asparagine 210 carries N-linked (GlcNAc...) asparagine glycosylation. A disordered region spans residues valine 259 to aspartate 291. Residues arginine 274–serine 285 show a composition bias toward pro residues. One can recognise a Fibronectin type-III domain in the interval glutamine 312–leucine 399. Residues leucine 318–methionine 342 form an LRR 6 repeat. A glycan (N-linked (GlcNAc...) asparagine) is linked at asparagine 376. Residues isoleucine 419–cysteine 439 form a helical membrane-spanning segment. Residues leucine 440–serine 828 are Cytoplasmic-facing. Position 461 is a phosphoserine (serine 461). Disordered stretches follow at residues threonine 517 to valine 552, leucine 624 to proline 649, and lysine 696 to arginine 732. Residues arginine 529–leucine 541 show a composition bias toward basic and acidic residues. Low complexity predominate over residues alanine 632–proline 649. Serine 645 bears the Phosphoserine mark. Positions lysine 696–histidine 705 are enriched in basic and acidic residues. Pro residues predominate over residues alanine 713–histidine 727.

As to quaternary structure, interacts with PPP1CA.

Its subcellular location is the membrane. The protein localises to the cell projection. It localises to the dendrite. Functionally, postsynaptic protein that regulates circuit dynamics in the central nervous system by modulating the temporal dynamics of interneuron recruitment. Specifically present in excitatory synapses onto oriens-lacunosum molecular (OLM) interneurons and acts as a regulator of presynaptic release probability to direct the formation of highly facilitating pyramidal-OLM synapses. Inhibits phosphatase activity of protein phosphatase 1 (PP1) complexes. This Homo sapiens (Human) protein is Protein ELFN1 (ELFN1).